The sequence spans 150 residues: 3-hydroxyacyl-[acyl-carrier-protein] dehydratase FabZ (150 aa).

His54 is a catalytic residue.

Belongs to the thioester dehydratase family. FabZ subfamily.

Its subcellular location is the cytoplasm. It catalyses the reaction a (3R)-hydroxyacyl-[ACP] = a (2E)-enoyl-[ACP] + H2O. Functionally, involved in unsaturated fatty acids biosynthesis. Catalyzes the dehydration of short chain beta-hydroxyacyl-ACPs and long chain saturated and unsaturated beta-hydroxyacyl-ACPs. The polypeptide is 3-hydroxyacyl-[acyl-carrier-protein] dehydratase FabZ (Pseudoalteromonas translucida (strain TAC 125)).